Here is a 260-residue protein sequence, read N- to C-terminus: Indole-3-glycerol phosphate synthase (260 aa).

Belongs to the TrpC family.

The catalysed reaction is 1-(2-carboxyphenylamino)-1-deoxy-D-ribulose 5-phosphate + H(+) = (1S,2R)-1-C-(indol-3-yl)glycerol 3-phosphate + CO2 + H2O. Its pathway is amino-acid biosynthesis; L-tryptophan biosynthesis; L-tryptophan from chorismate: step 4/5. The sequence is that of Indole-3-glycerol phosphate synthase from Thermoanaerobacter sp. (strain X514).